A 276-amino-acid chain; its full sequence is Polyamine aminopropyltransferase (276 aa).

Residues Glu3–Lys236 form the PABS domain. Residue Gln32 coordinates S-methyl-5'-thioadenosine. Residues His63 and Asp87 each contribute to the spermidine site. Residues Asp107 and Asp138 to Gly139 contribute to the S-methyl-5'-thioadenosine site. The active-site Proton acceptor is Asp156. Spermidine is bound at residue Asp156–Glu159. An S-methyl-5'-thioadenosine-binding site is contributed by Pro163.

This sequence belongs to the spermidine/spermine synthase family. As to quaternary structure, homodimer or homotetramer.

The protein resides in the cytoplasm. It carries out the reaction S-adenosyl 3-(methylsulfanyl)propylamine + putrescine = S-methyl-5'-thioadenosine + spermidine + H(+). Its pathway is amine and polyamine biosynthesis; spermidine biosynthesis; spermidine from putrescine: step 1/1. In terms of biological role, involved in the cell growth and proliferation. Catalyzes the irreversible transfer of a propylamine group from the amino donor S-adenosylmethioninamine (decarboxy-AdoMet) to putrescine (1,4-diaminobutane) to yield spermidine. The polypeptide is Polyamine aminopropyltransferase (Bacillus subtilis (strain 168)).